Reading from the N-terminus, the 150-residue chain is Protein A151R (150 aa).

This sequence belongs to the asfivirus A151R family. As to quaternary structure, monomer. Homodimer. Interacts with protein B119L. Interacts with membrane protein E248R. The cofactor is Zn(2+).

Its function is as follows. May participate in a redox cascade for the formation of disulfide bonds in viral proteins. This is Protein A151R from African swine fever virus (isolate Tick/Malawi/Lil 20-1/1983) (ASFV).